The sequence spans 160 residues: Phosphopantetheine adenylyltransferase (160 aa).

Thr10 contributes to the substrate binding site. Residues 10 to 11 and His18 contribute to the ATP site; that span reads TF. Substrate-binding residues include Lys42, Leu74, and Arg88. Residues 89-91, Glu99, and 124-130 contribute to the ATP site; these read GLR and NSFISST.

Belongs to the bacterial CoaD family. As to quaternary structure, homohexamer. The cofactor is Mg(2+).

It localises to the cytoplasm. It catalyses the reaction (R)-4'-phosphopantetheine + ATP + H(+) = 3'-dephospho-CoA + diphosphate. Its pathway is cofactor biosynthesis; coenzyme A biosynthesis; CoA from (R)-pantothenate: step 4/5. Its function is as follows. Reversibly transfers an adenylyl group from ATP to 4'-phosphopantetheine, yielding dephospho-CoA (dPCoA) and pyrophosphate. The polypeptide is Phosphopantetheine adenylyltransferase (Shewanella piezotolerans (strain WP3 / JCM 13877)).